The primary structure comprises 670 residues: Probable beta-glucosidase N (670 aa).

The signal sequence occupies residues 1–21 (MHSNILPVLTSVATLLGLVQG). Residue asparagine 51 is glycosylated (N-linked (GlcNAc...) asparagine). The interval 65–87 (FEPSDGVRSVQGSGKDYDNPAMR) is disordered. An N-linked (GlcNAc...) asparagine glycan is attached at asparagine 141. Residue aspartate 152 is part of the active site. Asparagine 184, asparagine 248, asparagine 330, and asparagine 417 each carry an N-linked (GlcNAc...) asparagine glycan.

Belongs to the glycosyl hydrolase 3 family.

The protein resides in the secreted. The catalysed reaction is Hydrolysis of terminal, non-reducing beta-D-glucosyl residues with release of beta-D-glucose.. The protein operates within glycan metabolism; cellulose degradation. Beta-glucosidases are one of a number of cellulolytic enzymes involved in the degradation of cellulosic biomass. Catalyzes the last step releasing glucose from the inhibitory cellobiose. The protein is Probable beta-glucosidase N (bglN) of Emericella nidulans (strain FGSC A4 / ATCC 38163 / CBS 112.46 / NRRL 194 / M139) (Aspergillus nidulans).